The primary structure comprises 401 residues: Deacetoxyvindoline 4-hydroxylase (401 aa).

The 104-residue stretch at 242-345 folds into the Fe2OG dioxygenase domain; sequence CAEGLILLGH…SVAVAFGIKT (104 aa). Residues H268, D270, and H324 each contribute to the Fe cation site. R334 provides a ligand contact to 2-oxoglutarate.

This sequence belongs to the iron/ascorbate-dependent oxidoreductase family. In terms of assembly, monomer. Requires Fe cation as cofactor. The cofactor is L-ascorbate. In terms of tissue distribution, highest levels in leaves, lower levels in stems and fruits. Not expressed in flowers and roots.

It localises to the cytoplasm. It is found in the nucleus. The catalysed reaction is deacetoxyvindoline + 2-oxoglutarate + O2 = 4-O-deacetylvindoline + succinate + CO2. It participates in alkaloid biosynthesis; vindoline biosynthesis. Functionally, catalyzes the C4-hydroxylation of desacetoxyvindoline. This Catharanthus roseus (Madagascar periwinkle) protein is Deacetoxyvindoline 4-hydroxylase.